The sequence spans 91 residues: Small ribosomal subunit protein bS16 (91 aa).

The protein belongs to the bacterial ribosomal protein bS16 family.

This Ligilactobacillus salivarius (strain UCC118) (Lactobacillus salivarius) protein is Small ribosomal subunit protein bS16.